A 140-amino-acid chain; its full sequence is Nucleoside diphosphate kinase (140 aa).

Positions 11, 59, 87, 93, 104, and 114 each coordinate ATP. Catalysis depends on histidine 117, which acts as the Pros-phosphohistidine intermediate.

Belongs to the NDK family. As to quaternary structure, homotetramer. It depends on Mg(2+) as a cofactor.

It is found in the cytoplasm. The catalysed reaction is a 2'-deoxyribonucleoside 5'-diphosphate + ATP = a 2'-deoxyribonucleoside 5'-triphosphate + ADP. It catalyses the reaction a ribonucleoside 5'-diphosphate + ATP = a ribonucleoside 5'-triphosphate + ADP. In terms of biological role, major role in the synthesis of nucleoside triphosphates other than ATP. The ATP gamma phosphate is transferred to the NDP beta phosphate via a ping-pong mechanism, using a phosphorylated active-site intermediate. In Rhodopseudomonas palustris (strain BisB18), this protein is Nucleoside diphosphate kinase.